The primary structure comprises 171 residues: Shikimate kinase (171 aa).

14–19 (GAGKST) is a binding site for ATP. Residue Ser-18 participates in Mg(2+) binding. 3 residues coordinate substrate: Asp-36, Arg-60, and Gly-82. Position 120 (Arg-120) interacts with ATP. Arg-139 is a substrate binding site. Gln-156 contributes to the ATP binding site.

This sequence belongs to the shikimate kinase family. Monomer. Mg(2+) serves as cofactor.

The protein resides in the cytoplasm. The catalysed reaction is shikimate + ATP = 3-phosphoshikimate + ADP + H(+). Its pathway is metabolic intermediate biosynthesis; chorismate biosynthesis; chorismate from D-erythrose 4-phosphate and phosphoenolpyruvate: step 5/7. Its function is as follows. Catalyzes the specific phosphorylation of the 3-hydroxyl group of shikimic acid using ATP as a cosubstrate. The protein is Shikimate kinase of Pseudoalteromonas atlantica (strain T6c / ATCC BAA-1087).